Here is a 1794-residue protein sequence, read N- to C-terminus: MMVFQSFILGNLVSLCMKIINSVVVVGLYYGFLTTFSIGPSYLFLLRARVMDEGEEGTEKKVSATTGFIAGQLMMFISIYYAPLHLALGRPHTITVLALPYLLFHFFWNNHKHFFDYGSTTRNEMRNLRIQCVFLNNLIFQLFNHFILPSSMLARLVNIYMFRCNNKMLFVTSSFVGWLIGHILFMKWVGLVLVWIQQNNSIRSNVLIRSNKYKFLVSELRNSMARIFSILLFITCVYYLGRIPSPIFTKKLKGTSETGGTKQDQEVSTEEAPFPSLFSEEGEDLDKIDEMEEIRVNGKDKINKDDEFHVRTYYNYKTVSENLDGNKENSNLEFFKIKKKEDHFLWFEKPFVTLVFDYKRWNRPNRYIKNDKIENTVRNEMSQYFFYTCQSDGKERISFTYPPNLSTFFEMIQKRIPSFTREKTPSDQVSTYWSFIHEEKKENLKKAFLNRIEALDKEWSVENILEKTTRFCYNEAKKEYLPKIYDPFLHGVSRGKIKKLPPLQIITKTYRKNNIGRSWINKIHGLLLKINYHKFEQTIEKFNRKSLSIEKKLSFFSEPQQEEKIHSEEEIKVFKFLFDIVRTDSNDQTLIKNFSDFHEINKKVPRWSYKLISELEELEGENEENVPMEPGIRSRKAKRVVVFTDKEPHDEIYTNLKDNQNSDQKDEMALIRYSQQSDFRREIIKGSMRSQRRKTVIWDFFQAKVHSPLFFDRIDKLFFFSFDIWGLKKQILRNFMWKNKKKNFDKKEEEQSKIEEKRRIEIAETWDSFLFAQIIRGSLLVIQSILRKYIILPLLIIIKNSVRMLLFQFPEWSEDLKDWKREMHVKCTYNGVQLSETEFPRNWLTDGIQIKILFPFYLKPWHKSKFQASQKARLKKTTDKREKNDFCFLTVWGTETELPFGSAQKKPSFFEPIFKELKKRIKKLKTKSFLVLSIFKERATIFLKVAKEIKNWILKNFLFIKGKIKDLSKRNKIPVFDSREIYELNVNQTKKDSIISNQMINELSVQKKSMEWTNSSLSENKIKNLIDRIKTIRNQIEEISKEKQNLTNSCTKLRYDSKIIESSKKIWQTFKRKNTRLIRKSIFFIKFCIEQLSRAFFLGIINIPRTTIQLFFESTKTILDKYIYKNQENGEKKKKKNTIYFISTIKNLISKKKISYDLCSLSQAYVFYKLSQIKVSNFSKLKDVFEYNIRITSFFVKNQIKVFFQEQGIFHYELKNKTFLNSEVNQWKNWLRSHYQYNLPQIAWARLVTQNWKKKINKDSLVLNPSLTKEDSYEKKKFDNYKKQNFFEADALLNPKHNFKKDSIYNLFCYKSIHSTEKNLDMSIGIALDNCLVSSFLEKYNIRGIGEIRHRKYLDWRILNFWFTKKVNIEPWVDTKSKKKYINTKVQNYQRIDKITKTGLANQKRNFFDWMGMNEEILNHRITNFEFFFFPEFLLFSSTYKIKPWVIPIKLLLLNFTENINVSKNITRKKKGFIPSNEKKSLRFYNLTKEEKESAGQVELESDKEKKRNPESALLNQEKNIEENYAESTIKKRKNKKQYKSNSEAELDLFLTRYSRFQLRWNCFFNQKILNNVKVYCLLVRLKNPNEIAISSIERGEMSLDILMIEKNFTFAKLMKKGILIIEPIRLSVQNDGQLIIYRTIGISLVHKNKHKISKRYKKKSYIDKKKIEKSITKYQKKTVNRKKNNYDFFVPENILSPKRRREFRILICFNLKKKTVRDRNSRFDKNIQNWTTVLHKKKDLDKDKKNLINLKSFLWPNFKLKNLACMNRYWFNTTNGNHFSMIRIRMYTRFPIH.

6 consecutive transmembrane segments (helical) span residues 19–39 (IINSVVVVGLYYGFLTTFSIG), 68–88 (FIAGQLMMFISIYYAPLHLAL), 91–111 (PHTITVLALPYLLFHFFWNNH), 133–153 (VFLNNLIFQLFNHFILPSSML), 176–196 (VGWLIGHILFMKWVGLVLVWI), and 227–247 (IFSILLFITCVYYLGRIPSPI).

This sequence belongs to the TIC214 family. As to quaternary structure, part of the Tic complex.

It is found in the plastid. The protein localises to the chloroplast inner membrane. Functionally, involved in protein precursor import into chloroplasts. May be part of an intermediate translocation complex acting as a protein-conducting channel at the inner envelope. This Olimarabidopsis pumila (Dwarf rocket) protein is Protein TIC 214.